The chain runs to 250 residues: Aminoglycoside 3'-phosphotransferase (250 aa).

The Proton acceptor role is filled by Asp178.

Belongs to the aminoglycoside phosphotransferase family.

The catalysed reaction is kanamycin A + ATP = kanamycin 3'-phosphate + ADP + H(+). Resistance to kanamycin and structurally-related aminoglycosides, including amikacin. In Campylobacter jejuni, this protein is Aminoglycoside 3'-phosphotransferase (aphA-7).